A 132-amino-acid polypeptide reads, in one-letter code: Agouti-signaling protein (132 aa).

Positions 1-22 are cleaved as a signal peptide; the sequence is MDVTRLLLATLLVFLCFFTADS. N-linked (GlcNAc...) asparagine glycosylation is present at asparagine 39. The segment at 62–85 is disordered; the sequence is ISRKEAEKKRSSKKEASMKTVARP. Residues 63–78 are compositionally biased toward basic and acidic residues; sequence SRKEAEKKRSSKKEAS. 5 cysteine pairs are disulfide-bonded: cysteine 93–cysteine 108, cysteine 100–cysteine 114, cysteine 107–cysteine 125, cysteine 111–cysteine 132, and cysteine 116–cysteine 123. Positions 93–132 constitute an Agouti domain; it reads CVATRNSCKPPAPACCDPCASCQCRFFRSACSCRVLSLNC.

Its subcellular location is the secreted. Its function is as follows. Involved in the regulation of melanogenesis. The binding of ASP to MC1R precludes alpha-MSH initiated signaling and thus blocks production of cAMP, leading to a down-regulation of eumelanogenesis (brown/black pigment) and thus increasing synthesis of pheomelanin (yellow/red pigment). This is Agouti-signaling protein (ASIP) from Pongo pygmaeus (Bornean orangutan).